We begin with the raw amino-acid sequence, 311 residues long: Large ribosomal subunit protein uL22 (311 aa).

Belongs to the universal ribosomal protein uL22 family. As to quaternary structure, part of the 50S ribosomal subunit.

This protein binds specifically to 23S rRNA; its binding is stimulated by other ribosomal proteins, e.g. L4, L17, and L20. It is important during the early stages of 50S assembly. It makes multiple contacts with different domains of the 23S rRNA in the assembled 50S subunit and ribosome. Its function is as follows. The globular domain of the protein is located near the polypeptide exit tunnel on the outside of the subunit, while an extended beta-hairpin is found that lines the wall of the exit tunnel in the center of the 70S ribosome. The sequence is that of Large ribosomal subunit protein uL22 (rplV) from Ureaplasma parvum serovar 3 (strain ATCC 27815 / 27 / NCTC 11736).